The chain runs to 368 residues: tRNA-specific 2-thiouridylase MnmA (368 aa).

Residues glycine 12–serine 19 and methionine 38 each bind ATP. The interaction with target base in tRNA stretch occupies residues asparagine 98 to aspartate 100. The active-site Nucleophile is cysteine 103. An intrachain disulfide couples cysteine 103 to cysteine 200. Position 128 (glycine 128) interacts with ATP. Positions lysine 150–glutamine 152 are interaction with tRNA. Residue cysteine 200 is the Cysteine persulfide intermediate of the active site. The interaction with tRNA stretch occupies residues arginine 313–tyrosine 314.

Belongs to the MnmA/TRMU family. As to quaternary structure, interacts with TusE.

The protein localises to the cytoplasm. It catalyses the reaction S-sulfanyl-L-cysteinyl-[protein] + uridine(34) in tRNA + AH2 + ATP = 2-thiouridine(34) in tRNA + L-cysteinyl-[protein] + A + AMP + diphosphate + H(+). Catalyzes the 2-thiolation of uridine at the wobble position (U34) of tRNA(Lys), tRNA(Glu) and tRNA(Gln), leading to the formation of s(2)U34, the first step of tRNA-mnm(5)s(2)U34 synthesis. Sulfur is provided by IscS, via a sulfur-relay system. Binds ATP and its substrate tRNAs. This Pectobacterium atrosepticum (strain SCRI 1043 / ATCC BAA-672) (Erwinia carotovora subsp. atroseptica) protein is tRNA-specific 2-thiouridylase MnmA.